Consider the following 2624-residue polypeptide: Highly reducing polyketide synthase ALT1 (2624 aa).

The Ketosynthase family 3 (KS3) domain occupies 28–449; the sequence is VLPLAIVGMG…GSNAHCILES (422 aa). The active-site For beta-ketoacyl synthase activity is cysteine 200. Residues 289 to 308 are disordered; that stretch reads VRGTSSNSDGKTPGMSMPSS. Catalysis depends on for beta-ketoacyl synthase activity residues histidine 335 and histidine 372. Residues 523–544 show a composition bias toward polar residues; the sequence is ESYSNHHTLTETTNPSNNTATN. The segment at 523–545 is disordered; the sequence is ESYSNHHTLTETTNPSNNTATNG. The malonyl-CoA:ACP transacylase (MAT) domain stretch occupies residues 639–945; it reads VFTGQGAQWA…GYTPAMIRGK (307 aa). Positions 1009 to 1140 are N-terminal hotdog fold; that stretch reads HELLGSQTLE…GQVRPGRDAH (132 aa). The tract at residues 1009–1301 is dehydratase (DH) domain; sequence HELLGSQTLE…LEGGKFSPIE (293 aa). The region spanning 1009–1306 is the PKS/mFAS DH domain; sequence HELLGSQTLE…FSPIEVDDGI (298 aa). Histidine 1041 (proton acceptor; for dehydratase activity) is an active-site residue. Residues 1157–1306 form a C-terminal hotdog fold region; the sequence is QYPRPVDSLY…FSPIEVDDGI (150 aa). Residue aspartate 1217 is the Proton donor; for dehydratase activity of the active site. Residues 1493–1599 form a methyltransferase (CMet) domain region; that stretch reads LEIGAGTGGA…RKLLAPEGYL (107 aa). Residues 1895–2205 are enoyl reductase (ER) (ER) domain; the sequence is GLLQTLKWVD…KGTHLGKIVV (311 aa). A ketoreductase (KR) domain region spans residues 2230-2509; it reads TYVLVGGLGG…DSDALRFFIT (280 aa). One can recognise a Carrier domain in the interval 2522–2600; it reads ASLDLVTRTI…GLAKLILDAL (79 aa). At serine 2559 the chain carries O-(pantetheine 4'-phosphoryl)serine.

Its pathway is mycotoxin biosynthesis. In terms of biological role, highly reducing polyketide synthase; part of the gene cluster that mediates the biosynthesis of the host-selective toxins (HSTs) AAL-toxins, sphinganine-analog mycotoxins responsible for Alternaria stem canker on tomato by the tomato pathotype. The biosynthesis starts with the polyketide synthase ALT1-catalyzed C-16 carbon chain assembly from one starter acetyl-CoA unit with malonyl-CoA extender units. ALT1 also selectively transfers methyl groups at the first and the third cycle of chain elongation for AAL toxin. The C-16 polyketide chain is released from the enzyme by a nucleophilic attack of a carbanion, which is derived from R-carbon of glycin by decarboxylation, on the carbonyl carbon of polyketide acyl chain. This step is probably catalyzed by a pyridoxal 5'-phosphate-dependent aminoacyl transferase ALT4. The respective functions of the other enzymes encoded by the cluster have still to be elucidated. The sphingosine N-acyltransferase-like protein ALT7 seems not to act as a resistance/self-tolerance factor against the toxin in the toxin biosynthetic gene cluster, contrary to what is expected. This is Highly reducing polyketide synthase ALT1 from Alternaria alternata (Alternaria rot fungus).